The following is a 23-amino-acid chain: Septenin 2b (23 aa).

As to expression, expressed in skin glands.

It localises to the secreted. May act as an antimicrobial peptide. The chain is Septenin 2b from Osteopilus septentrionalis (Cuban treefrog).